The primary structure comprises 249 residues: 2,3-bisphosphoglycerate-dependent phosphoglycerate mutase (249 aa).

Substrate-binding positions include 8-15 (RHGQSAWN), 21-22 (TG), arginine 60, 87-90 (ERHY), lysine 98, 114-115 (RR), and 183-184 (GN). Histidine 9 acts as the Tele-phosphohistidine intermediate in catalysis. Glutamate 87 serves as the catalytic Proton donor/acceptor. The disordered stretch occupies residues 115–137 (RSYDTPPPPLPADDPRSPAGDAR).

The protein belongs to the phosphoglycerate mutase family. BPG-dependent PGAM subfamily. Homodimer.

It carries out the reaction (2R)-2-phosphoglycerate = (2R)-3-phosphoglycerate. Its pathway is carbohydrate degradation; glycolysis; pyruvate from D-glyceraldehyde 3-phosphate: step 3/5. Catalyzes the interconversion of 2-phosphoglycerate and 3-phosphoglycerate. The chain is 2,3-bisphosphoglycerate-dependent phosphoglycerate mutase from Nitratidesulfovibrio vulgaris (strain DSM 19637 / Miyazaki F) (Desulfovibrio vulgaris).